A 338-amino-acid polypeptide reads, in one-letter code: MSKPIVLSGVQPSGELSIGNYLGALRQWQQMQDDYDCQYCVVDLHAITVRQDPKALHEATLDALAICLAVGVDPKKSTLFVQSHVPEHAQLGWLLNCYTQMGELSRMTQFKDKSARYANDVNVGLFGYPVLMAADILLYGAHQVPVGSDQKQHLELARDIATRFNNIYSPENPIFTIPEPYIPTVNARVMSLQDATKKMSKSDDNRKNVITLLEDPKSIIKKINKAQTDTETPPRIAHDWDNKAGISNLMGLYSAATGMSFEEIEAKYQGVEMYGPFKKDVGEALVSMLEPIQAEYHRIREDRGYMNEVMRQGADKASARAAETLKKVYEVVGFVGRP.

ATP-binding positions include Q11–S13 and G19–N20. The 'HIGH' region motif lies at P12–N20. D135 is an L-tryptophan binding site. ATP is bound by residues G147–D149, V189, and K198–S202. Positions K198–S202 match the 'KMSKS' region motif.

Belongs to the class-I aminoacyl-tRNA synthetase family. As to quaternary structure, homodimer.

The protein localises to the cytoplasm. It carries out the reaction tRNA(Trp) + L-tryptophan + ATP = L-tryptophyl-tRNA(Trp) + AMP + diphosphate + H(+). Functionally, catalyzes the attachment of tryptophan to tRNA(Trp). The sequence is that of Tryptophan--tRNA ligase from Vibrio vulnificus (strain CMCP6).